The primary structure comprises 561 residues: Potassium-transporting ATPase potassium-binding subunit (561 aa).

10 helical membrane passes run 4 to 24, 65 to 85, 133 to 153, 177 to 197, 253 to 273, 285 to 305, 380 to 400, 417 to 437, 484 to 504, and 528 to 548; these read IVMQ…PLGI, AVSV…VLML, IGLT…LFAV, LYIL…QGVV, FTNL…VVMF, AIMT…TISE, GLYG…LLVG, MVCL…AVAV, MVGA…ALYL, and FIGL…LPAL.

It belongs to the KdpA family. The system is composed of three essential subunits: KdpA, KdpB and KdpC.

It is found in the cell membrane. Its function is as follows. Part of the high-affinity ATP-driven potassium transport (or Kdp) system, which catalyzes the hydrolysis of ATP coupled with the electrogenic transport of potassium into the cytoplasm. This subunit binds the extracellular potassium ions and delivers the ions to the membrane domain of KdpB through an intramembrane tunnel. The polypeptide is Potassium-transporting ATPase potassium-binding subunit (Listeria monocytogenes serotype 4a (strain HCC23)).